Consider the following 88-residue polypeptide: Large ribosomal subunit protein eL15 (88 aa).

This sequence belongs to the eukaryotic ribosomal protein eL15 family.

This Brassica napus (Rape) protein is Large ribosomal subunit protein eL15 (RPL15).